Reading from the N-terminus, the 344-residue chain is Ribosomal RNA large subunit methyltransferase Cfr (344 aa).

Glu90 functions as the Proton acceptor in the catalytic mechanism. Residues 97-330 (KQGWESFCIS…ATVRTQFGSE (234 aa)) enclose the Radical SAM core domain. A disulfide bond links Cys104 and Cys335. [4Fe-4S] cluster is bound by residues Cys111, Cys115, and Cys118. Residues 157–158 (GE), Ser188, 211–213 (SLH), and Asn292 each bind S-adenosyl-L-methionine. The active-site S-methylcysteine intermediate is the Cys335.

This sequence belongs to the radical SAM superfamily. RlmN family. Cfr subfamily. [4Fe-4S] cluster is required as a cofactor.

The protein resides in the cytoplasm. It carries out the reaction adenosine(2503) in 23S rRNA + 2 reduced [2Fe-2S]-[ferredoxin] + 2 S-adenosyl-L-methionine = 8-methyladenosine(2503) in 23S rRNA + 5'-deoxyadenosine + L-methionine + 2 oxidized [2Fe-2S]-[ferredoxin] + S-adenosyl-L-homocysteine. Specifically methylates position 8 of adenine 2503 in 23S rRNA. Confers resistance to some classes of antibiotics. In Clostridium botulinum (strain Hall / ATCC 3502 / NCTC 13319 / Type A), this protein is Ribosomal RNA large subunit methyltransferase Cfr.